The chain runs to 282 residues: NADPH-dependent 7-cyano-7-deazaguanine reductase (282 aa).

Position 88–90 (88–90) interacts with substrate; the sequence is IES. 90 to 91 contributes to the NADPH binding site; sequence SK. Cys-190 (thioimide intermediate) is an active-site residue. The active-site Proton donor is Asp-197. 229 to 230 contributes to the substrate binding site; it reads HE. 258–259 provides a ligand contact to NADPH; that stretch reads RG.

This sequence belongs to the GTP cyclohydrolase I family. QueF type 2 subfamily. In terms of assembly, homodimer.

The protein resides in the cytoplasm. The catalysed reaction is 7-aminomethyl-7-carbaguanine + 2 NADP(+) = 7-cyano-7-deazaguanine + 2 NADPH + 3 H(+). It functions in the pathway tRNA modification; tRNA-queuosine biosynthesis. Catalyzes the NADPH-dependent reduction of 7-cyano-7-deazaguanine (preQ0) to 7-aminomethyl-7-deazaguanine (preQ1). The sequence is that of NADPH-dependent 7-cyano-7-deazaguanine reductase from Escherichia coli (strain K12 / MC4100 / BW2952).